The primary structure comprises 268 residues: Very-long-chain aldehyde decarbonylase GL1-8 (268 aa).

4 consecutive transmembrane segments (helical) span residues 26 to 46 (IGTFLLHESVFFLSGLPSLLF), 70 to 90 (CVVRLVLYHVCVNLPLTILSY), 107 to 127 (WTVVVSQVLFFFVLEDFIFYW), and 164 to 184 (ILFLGFATVAGPALTGPHLFT). Residues 114 to 249 (VLFFFVLEDF…FIYMDWLFGT (136 aa)) form the Fatty acid hydroxylase domain.

It belongs to the sterol desaturase family. As to quaternary structure, homodimer.

Its subcellular location is the endoplasmic reticulum membrane. The catalysed reaction is a long-chain fatty aldehyde + 2 NADPH + O2 + H(+) = a long-chain alkane + formate + 2 NADP(+) + H2O. Its function is as follows. Aldehyde decarbonylase involved in the conversion of aldehydes to alkanes. Core component of a very-long-chain alkane synthesis complex. The chain is Very-long-chain aldehyde decarbonylase GL1-8 from Oryza sativa subsp. indica (Rice).